Reading from the N-terminus, the 177-residue chain is Adenine phosphoribosyltransferase (177 aa).

This sequence belongs to the purine/pyrimidine phosphoribosyltransferase family. Homodimer.

It localises to the cytoplasm. It carries out the reaction AMP + diphosphate = 5-phospho-alpha-D-ribose 1-diphosphate + adenine. The protein operates within purine metabolism; AMP biosynthesis via salvage pathway; AMP from adenine: step 1/1. Functionally, catalyzes a salvage reaction resulting in the formation of AMP, that is energically less costly than de novo synthesis. The protein is Adenine phosphoribosyltransferase of Chlorobium luteolum (strain DSM 273 / BCRC 81028 / 2530) (Pelodictyon luteolum).